The following is a 643-amino-acid chain: Type VI secretion system spike protein VgrG1a (643 aa).

The protein belongs to the VgrG protein family. In terms of assembly, forms homotrimers. Part of the type VI secretion system (T6SS). Interacts with EagT6 and Tse6; these interactions are required for Tse6 loading onto VgrG1. Interacts with Hcp1.

The protein localises to the secreted. Its function is as follows. Part of the H1 type VI secretion system (H1-T6SS) specialized secretion system, which delivers several virulence factors in both prokaryotic and eukaryotic cells during infection. Forms the spike at the tip of the elongating tube formed by haemolysin co-regulated protein 1/Hcp1. Allows the delivery of the Tse6 toxin to target cells where it exerts its toxicity. This Pseudomonas aeruginosa (strain ATCC 15692 / DSM 22644 / CIP 104116 / JCM 14847 / LMG 12228 / 1C / PRS 101 / PAO1) protein is Type VI secretion system spike protein VgrG1a.